We begin with the raw amino-acid sequence, 175 residues long: CDP-archaeol synthase (175 aa).

4 consecutive transmembrane segments (helical) span residues 41-61 (GFFV…QLLE), 82-102 (TILI…MSFF), 122-142 (FVLG…AEQF), and 147-167 (IAVI…VGYF).

The protein belongs to the CDP-archaeol synthase family. It depends on Mg(2+) as a cofactor.

The protein resides in the cell membrane. The catalysed reaction is 2,3-bis-O-(geranylgeranyl)-sn-glycerol 1-phosphate + CTP + H(+) = CDP-2,3-bis-O-(geranylgeranyl)-sn-glycerol + diphosphate. It functions in the pathway membrane lipid metabolism; glycerophospholipid metabolism. Functionally, catalyzes the formation of CDP-2,3-bis-(O-geranylgeranyl)-sn-glycerol (CDP-archaeol) from 2,3-bis-(O-geranylgeranyl)-sn-glycerol 1-phosphate (DGGGP) and CTP. This reaction is the third ether-bond-formation step in the biosynthesis of archaeal membrane lipids. This chain is CDP-archaeol synthase, found in Methanococcoides burtonii (strain DSM 6242 / NBRC 107633 / OCM 468 / ACE-M).